The chain runs to 762 residues: Semaphorin-4A (762 aa).

The first 32 residues, 1-32 (MALPALGLDSWSFLGLFLFQLLLLFLPPATTA), serve as a signal peptide directing secretion. The Extracellular portion of the chain corresponds to 33-684 (GREGQGPTPR…LAAPKSYWPH (652 aa)). One can recognise a Sema domain in the interval 37–495 (QGPTPRVKYH…FSGGIWKVPR (459 aa)). Cys114 and Cys125 are joined by a disulfide. Residues Asn121 and Asn136 are each glycosylated (N-linked (GlcNAc...) asparagine). 3 disulfides stabilise this stretch: Cys143-Cys152, Cys270-Cys380, and Cys294-Cys340. Residues Asn314 and Asn497 are each glycosylated (N-linked (GlcNAc...) asparagine). The PSI domain maps to 497–544 (NCSVYESCMDCVLARDPHCAWDPESQTCRLLPTPILKSWKQDMQQGNP). Cystine bridges form between Cys498/Cys515 and Cys507/Cys524. One can recognise an Ig-like C2-type domain in the interval 574–632 (NSILELPCPQSSALASYHWSHGVEAIPEAPSTVYNGSLLLLLRDGAGGLYQCWATENDF). Asn608 is a glycosylation site (N-linked (GlcNAc...) asparagine). A helical transmembrane segment spans residues 685–705 (FLTVTVLLALVLSGALVTFLV). The Cytoplasmic portion of the chain corresponds to 706 to 762 (SPLGALRARGKVQGCGTLPSREKAPLSSEQCLQPSKEGRTSASDMDADNNLQGTEVA). The interval 722–762 (TLPSREKAPLSSEQCLQPSKEGRTSASDMDADNNLQGTEVA) is disordered.

It belongs to the semaphorin family. As to quaternary structure, interacts with PLXNB1, PLXNB2, PLXNB3, PLXND1 and TIMD2.

Its subcellular location is the cell membrane. Its function is as follows. Cell surface receptor for PLXNB1, PLXNB2, PLXNB3 and PLXND1 that plays an important role in cell-cell signaling. Regulates glutamatergic and GABAergic synapse development. Promotes the development of inhibitory synapses in a PLXNB1-dependent manner and promotes the development of excitatory synapses in a PLXNB2-dependent manner. Plays a role in priming antigen-specific T-cells, promotes differentiation of Th1 T-helper cells, and thereby contributes to adaptive immunity. Promotes phosphorylation of TIMD2. Inhibits angiogenesis. Promotes axon growth cone collapse. Inhibits axonal extension by providing local signals to specify territories inaccessible for growing axons. This is Semaphorin-4A (SEMA4A) from Bos taurus (Bovine).